Here is a 303-residue protein sequence, read N- to C-terminus: 4-hydroxy-tetrahydrodipicolinate synthase (303 aa).

A pyruvate-binding site is contributed by Thr-57. Tyr-143 serves as the catalytic Proton donor/acceptor. The active-site Schiff-base intermediate with substrate is the Lys-171. Ile-211 contacts pyruvate.

It belongs to the DapA family. In terms of assembly, homotetramer; dimer of dimers.

The protein resides in the cytoplasm. The catalysed reaction is L-aspartate 4-semialdehyde + pyruvate = (2S,4S)-4-hydroxy-2,3,4,5-tetrahydrodipicolinate + H2O + H(+). The protein operates within amino-acid biosynthesis; L-lysine biosynthesis via DAP pathway; (S)-tetrahydrodipicolinate from L-aspartate: step 3/4. Functionally, catalyzes the condensation of (S)-aspartate-beta-semialdehyde [(S)-ASA] and pyruvate to 4-hydroxy-tetrahydrodipicolinate (HTPA). The sequence is that of 4-hydroxy-tetrahydrodipicolinate synthase from Bifidobacterium animalis subsp. lactis (strain AD011).